The following is a 152-amino-acid chain: Actin-related protein 2/3 complex subunit 5-B (152 aa).

The segment at 21–44 is disordered; that stretch reads NKFVDDQLQEEPAEPQGPDEAEVD. A compositionally biased stretch (acidic residues) spans 27–43; it reads QLQEEPAEPQGPDEAEV.

The protein belongs to the ARPC5 family. Component of the Arp2/3 complex composed of actr2/arp2, actr3/arp3, arpc1 (arpc1a or arpc1b), arpc2, arpc3, arpc4 and arpc5.

Its subcellular location is the cytoplasm. It localises to the cytoskeleton. It is found in the cell projection. The protein localises to the nucleus. Component of the Arp2/3 complex, a multiprotein complex that mediates actin polymerization upon stimulation by nucleation-promoting factor (NPF). The Arp2/3 complex mediates the formation of branched actin networks in the cytoplasm, providing the force for cell motility. In addition to its role in the cytoplasmic cytoskeleton, the Arp2/3 complex also promotes actin polymerization in the nucleus, thereby regulating gene transcription and repair of damaged DNA. The Arp2/3 complex promotes homologous recombination (HR) repair in response to DNA damage by promoting nuclear actin polymerization, leading to drive motility of double-strand breaks (DSBs). The sequence is that of Actin-related protein 2/3 complex subunit 5-B (arpc5-b) from Xenopus laevis (African clawed frog).